The chain runs to 556 residues: Arginine--tRNA ligase (556 aa).

Residues 132–142 (ANPTGDLHLGH) carry the 'HIGH' region motif.

This sequence belongs to the class-I aminoacyl-tRNA synthetase family. As to quaternary structure, monomer.

It is found in the cytoplasm. It catalyses the reaction tRNA(Arg) + L-arginine + ATP = L-arginyl-tRNA(Arg) + AMP + diphosphate. This is Arginine--tRNA ligase from Bacillus velezensis (strain DSM 23117 / BGSC 10A6 / LMG 26770 / FZB42) (Bacillus amyloliquefaciens subsp. plantarum).